The sequence spans 426 residues: Adenylosuccinate synthetase (426 aa).

GTP contacts are provided by residues 13–19 (GDEGKGK) and 41–43 (GHT). The active-site Proton acceptor is the aspartate 14. The Mg(2+) site is built by aspartate 14 and glycine 41. Residues 14–17 (DEGK), 39–42 (NAGH), threonine 129, arginine 143, glutamine 224, threonine 239, and arginine 303 each bind IMP. Histidine 42 serves as the catalytic Proton donor. Position 299–305 (299–305 (TTTGRPR)) interacts with substrate. Residues arginine 305, 331–333 (KLD), and 414–416 (GTG) each bind GTP.

Belongs to the adenylosuccinate synthetase family. In terms of assembly, homodimer. Mg(2+) serves as cofactor.

The protein resides in the cytoplasm. It catalyses the reaction IMP + L-aspartate + GTP = N(6)-(1,2-dicarboxyethyl)-AMP + GDP + phosphate + 2 H(+). The protein operates within purine metabolism; AMP biosynthesis via de novo pathway; AMP from IMP: step 1/2. Its function is as follows. Plays an important role in the de novo pathway of purine nucleotide biosynthesis. Catalyzes the first committed step in the biosynthesis of AMP from IMP. In Caldicellulosiruptor bescii (strain ATCC BAA-1888 / DSM 6725 / KCTC 15123 / Z-1320) (Anaerocellum thermophilum), this protein is Adenylosuccinate synthetase.